Here is a 463-residue protein sequence, read N- to C-terminus: Methionine aminopeptidase 2-1 (463 aa).

The disordered stretch occupies residues 1-98 (MGSKTPEEQI…PPRVPLSDLF (98 aa)). Residues 30–45 (RGTHLSRDGDGSLGDH) are compositionally biased toward basic and acidic residues. The segment covering 46–55 (GDDDDADEDD) has biased composition (acidic residues). The segment covering 69-81 (KKKKRPKKKKKPA) has biased composition (basic residues). Substrate is bound at residue His-214. Residues Asp-235, Asp-246, and His-315 each contribute to the a divalent metal cation site. Residue His-323 participates in substrate binding. Residues Glu-348 and Glu-444 each contribute to the a divalent metal cation site.

The protein belongs to the peptidase M24A family. Methionine aminopeptidase eukaryotic type 2 subfamily. It depends on Co(2+) as a cofactor. Zn(2+) is required as a cofactor. The cofactor is Mn(2+). Fe(2+) serves as cofactor.

It is found in the cytoplasm. It carries out the reaction Release of N-terminal amino acids, preferentially methionine, from peptides and arylamides.. Cotranslationally removes the N-terminal methionine from nascent proteins. The N-terminal methionine is often cleaved when the second residue in the primary sequence is small and uncharged (Met-Ala-, Cys, Gly, Pro, Ser, Thr, or Val). In Colletotrichum graminicola (strain M1.001 / M2 / FGSC 10212) (Maize anthracnose fungus), this protein is Methionine aminopeptidase 2-1.